The sequence spans 425 residues: Dihydroorotase (425 aa).

The Zn(2+) site is built by His56 and His58. Substrate is bound by residues 58–60 and Asn90; that span reads HYR. 3 residues coordinate Zn(2+): Asp148, His175, and His228. Position 274 (Asn274) interacts with substrate. Zn(2+) is bound at residue Asp301. The active site involves Asp301. Substrate-binding positions include His305 and 319 to 320; that span reads FG.

Belongs to the metallo-dependent hydrolases superfamily. DHOase family. Class I DHOase subfamily. Requires Zn(2+) as cofactor.

It catalyses the reaction (S)-dihydroorotate + H2O = N-carbamoyl-L-aspartate + H(+). Its pathway is pyrimidine metabolism; UMP biosynthesis via de novo pathway; (S)-dihydroorotate from bicarbonate: step 3/3. Its function is as follows. Catalyzes the reversible cyclization of carbamoyl aspartate to dihydroorotate. In Lactobacillus delbrueckii subsp. bulgaricus (strain ATCC BAA-365 / Lb-18), this protein is Dihydroorotase.